A 437-amino-acid polypeptide reads, in one-letter code: Glutamate-1-semialdehyde 2,1-aminomutase (437 aa).

Lys274 is subject to N6-(pyridoxal phosphate)lysine.

Belongs to the class-III pyridoxal-phosphate-dependent aminotransferase family. HemL subfamily. Homodimer. Pyridoxal 5'-phosphate is required as a cofactor.

It is found in the cytoplasm. It carries out the reaction (S)-4-amino-5-oxopentanoate = 5-aminolevulinate. Its pathway is porphyrin-containing compound metabolism; protoporphyrin-IX biosynthesis; 5-aminolevulinate from L-glutamyl-tRNA(Glu): step 2/2. The chain is Glutamate-1-semialdehyde 2,1-aminomutase from Leptothrix cholodnii (strain ATCC 51168 / LMG 8142 / SP-6) (Leptothrix discophora (strain SP-6)).